A 399-amino-acid chain; its full sequence is MSDQLILVLNCGSSSLKGAVIDRKSGSVVLSCLGERLTTPEAVITFNKDGNKRQVPLSGRNCHAGAVGMLLNELEKHGLHDRIKAIGHRIAHGGEKYSESVLIDQAVMDELNACIPLAPLHNPANISGILAAQEHFPGLPNVGVMDTSFHQTMPERAYTYAVPRELRKKYAFRRYGFHGTSMRYVAPEAARILGKPLEDIRMIIAHLGNGASITAIKNGKSVDTSMGFTPIEGLVMGTRCGDIDPGVYSYLTSHAGMDVAQVDEMLNKKSGLLGISELSNDCRTLEIAADEGHEGARLALEVMTYRLAKYIASMAVGCGGVDALVFTGGIGENSRNIRAKTVSYLDFLGLHIDTKANMEKRYGNSGIISPTDSSPAVLVVPTNEELMIACDTAELAGIL.

Asparagine 10 contributes to the Mg(2+) binding site. Lysine 17 lines the ATP pocket. Arginine 89 is a substrate binding site. Aspartate 146 functions as the Proton donor/acceptor in the catalytic mechanism. Residues 206–210 (HLGNG), 281–283 (DCR), and 329–333 (GIGEN) contribute to the ATP site. Glutamate 384 contacts Mg(2+).

Belongs to the acetokinase family. Homodimer. It depends on Mg(2+) as a cofactor. The cofactor is Mn(2+).

Its subcellular location is the cytoplasm. It catalyses the reaction acetate + ATP = acetyl phosphate + ADP. It participates in metabolic intermediate biosynthesis; acetyl-CoA biosynthesis; acetyl-CoA from acetate: step 1/2. Its function is as follows. Catalyzes the formation of acetyl phosphate from acetate and ATP. Can also catalyze the reverse reaction. This Neisseria meningitidis serogroup B (strain ATCC BAA-335 / MC58) protein is Acetate kinase 2.